We begin with the raw amino-acid sequence, 303 residues long: Glycine--tRNA ligase alpha subunit (303 aa).

Belongs to the class-II aminoacyl-tRNA synthetase family. As to quaternary structure, tetramer of two alpha and two beta subunits.

Its subcellular location is the cytoplasm. The catalysed reaction is tRNA(Gly) + glycine + ATP = glycyl-tRNA(Gly) + AMP + diphosphate. The polypeptide is Glycine--tRNA ligase alpha subunit (Cronobacter sakazakii (strain ATCC BAA-894) (Enterobacter sakazakii)).